The primary structure comprises 240 residues: Rho GDP-dissociation inhibitor 1 (240 aa).

The interval 1–66 (MSLVSGARDM…DDDSKLQLGP (66 aa)) is disordered.

It belongs to the Rho GDI family. In terms of assembly, interacts with RAC-like GTP binding proteins ARAC5/ROP4 and ARAC3/ROP6.

It is found in the cytoplasm. Functionally, regulates the GDP/GTP exchange reaction of the Rho proteins by inhibiting the dissociation of GDP from them, and the subsequent binding of GTP to them. This is Rho GDP-dissociation inhibitor 1 (GDI1) from Arabidopsis thaliana (Mouse-ear cress).